The chain runs to 376 residues: Glutamate 5-kinase (376 aa).

ATP is bound at residue K18. Residues S58, D145, and N157 each coordinate substrate. ATP contacts are provided by residues 177–178 and 218–224; these read SD and TGGMASK. The region spanning 280-358 is the PUA domain; the sequence is TGALTLDAGA…SELPGELRRP (79 aa).

This sequence belongs to the glutamate 5-kinase family.

It is found in the cytoplasm. It catalyses the reaction L-glutamate + ATP = L-glutamyl 5-phosphate + ADP. It functions in the pathway amino-acid biosynthesis; L-proline biosynthesis; L-glutamate 5-semialdehyde from L-glutamate: step 1/2. Its function is as follows. Catalyzes the transfer of a phosphate group to glutamate to form L-glutamate 5-phosphate. The sequence is that of Glutamate 5-kinase from Mycobacterium tuberculosis (strain CDC 1551 / Oshkosh).